Consider the following 355-residue polypeptide: MQVEVDLPNHPYHIKIEEGCFSEAGDWVSHLWQKQMITIITDSNVEILYGESLVNQLKKQGFTVHVFSFAAGEASKTLEVANRIYAFLAKHHMTRSDGIIALGGGVVGDLAAFVASTYMRGIHFLQIPTSLTAQVDSSIGGKTGVNTSFAKNMVGTFAQPDGVLIDPVTLKTLGNRELVEGMGEVIKYGLIDDIKLWHILEEMDGTIDSILDNALAIIYHSCQVKRKHVLADQYDKGLRMHLNFGHTIGHAIEVHAGYGEIMHGEAVAIGMIQLSRVAERKNLMPRGISQDIYNMCLKFGLPVHYAEWDKDVLFDILSHDKKASGQFIKIVILPQLGSATVHQIPLEEMRDYLEK.

NAD(+) is bound by residues 105–109 (GVVGD), 129–130 (TS), lysine 142, lysine 151, and 169–172 (TLKT). Zn(2+) is bound by residues glutamate 184, histidine 246, and histidine 263.

It belongs to the sugar phosphate cyclases superfamily. Dehydroquinate synthase family. NAD(+) serves as cofactor. The cofactor is Co(2+). Zn(2+) is required as a cofactor.

It localises to the cytoplasm. It catalyses the reaction 7-phospho-2-dehydro-3-deoxy-D-arabino-heptonate = 3-dehydroquinate + phosphate. It participates in metabolic intermediate biosynthesis; chorismate biosynthesis; chorismate from D-erythrose 4-phosphate and phosphoenolpyruvate: step 2/7. In terms of biological role, catalyzes the conversion of 3-deoxy-D-arabino-heptulosonate 7-phosphate (DAHP) to dehydroquinate (DHQ). This chain is 3-dehydroquinate synthase, found in Streptococcus agalactiae serotype V (strain ATCC BAA-611 / 2603 V/R).